The sequence spans 532 residues: 2,3-bisphosphoglycerate-independent phosphoglycerate mutase (532 aa).

Mn(2+) contacts are provided by Asp-15 and Ser-65. Ser-65 (phosphoserine intermediate) is an active-site residue. Substrate is bound by residues His-126, 156–157 (RD), Arg-188, Arg-194, 258–261 (RPDR), and Lys-331. Positions 398, 402, 439, 440, and 457 each coordinate Mn(2+).

Belongs to the BPG-independent phosphoglycerate mutase family. In terms of assembly, monomer. Requires Mn(2+) as cofactor.

The enzyme catalyses (2R)-2-phosphoglycerate = (2R)-3-phosphoglycerate. It functions in the pathway carbohydrate degradation; glycolysis; pyruvate from D-glyceraldehyde 3-phosphate: step 3/5. Its function is as follows. Catalyzes the interconversion of 2-phosphoglycerate and 3-phosphoglycerate. This Rippkaea orientalis (strain PCC 8801 / RF-1) (Cyanothece sp. (strain PCC 8801)) protein is 2,3-bisphosphoglycerate-independent phosphoglycerate mutase.